A 486-amino-acid polypeptide reads, in one-letter code: Protein DETOXIFICATION 27 (486 aa).

The interval 1–25 (MRGGDGEEGSESRVALLKSPHTAEE) is disordered. Helical transmembrane passes span 41-61 (LWQIVGPAIFSRVTTYSMLVI), 74-94 (LAAISIVNNVTVGFNFGLLLG), 124-144 (IVLFFCCVLLLPTYIFTTPVL), 153-173 (IAELSGVVAIWVIPLHFAFTL), 189-209 (VTAYAAAVALVVHILVCWLFV), 216-236 (VVGTVATISISWWVNVLILLV), 269-289 (GVMLCLENWYYRILIIMTGNL), 299-319 (LSICMAINGWEMMIPLAFFAG), 349-369 (IIGLFFWVLIMLLHNQIAWIF), 384-404 (LLLAFTVLLNSVQPVLSGVAV), 407-427 (GWQSYVAYINLGCYYCIGVPL), and 439-461 (VMGIWGGMIFGGTAVQTMILSFI).

This sequence belongs to the multi antimicrobial extrusion (MATE) (TC 2.A.66.1) family.

Its subcellular location is the membrane. In Arabidopsis thaliana (Mouse-ear cress), this protein is Protein DETOXIFICATION 27.